Consider the following 506-residue polypeptide: Maturase K (506 aa).

Belongs to the intron maturase 2 family. MatK subfamily.

The protein resides in the plastid. Its subcellular location is the chloroplast. Functionally, usually encoded in the trnK tRNA gene intron. Probably assists in splicing its own and other chloroplast group II introns. The sequence is that of Maturase K from Crataegus monogyna (Hawthorn).